Reading from the N-terminus, the 221-residue chain is Uracil-DNA glycosylase (221 aa).

D65 (proton acceptor) is an active-site residue.

Belongs to the uracil-DNA glycosylase (UDG) superfamily. UNG family.

The protein localises to the cytoplasm. The catalysed reaction is Hydrolyzes single-stranded DNA or mismatched double-stranded DNA and polynucleotides, releasing free uracil.. Functionally, excises uracil residues from the DNA which can arise as a result of misincorporation of dUMP residues by DNA polymerase or due to deamination of cytosine. The sequence is that of Uracil-DNA glycosylase from Flavobacterium johnsoniae (strain ATCC 17061 / DSM 2064 / JCM 8514 / BCRC 14874 / CCUG 350202 / NBRC 14942 / NCIMB 11054 / UW101) (Cytophaga johnsonae).